A 93-amino-acid chain; its full sequence is Bombyxin-related peptide B (93 aa).

The N-terminal stretch at 1–21 (MKFVLVLVSLALLVSLASVQG) is a signal peptide. Intrachain disulfides connect cysteine 25–cysteine 80, cysteine 37–cysteine 93, and cysteine 79–cysteine 84. Residues 47-71 (SGAMGAAAMYGTRGWRWAAMGGNRG) constitute a propeptide, c peptide like.

It belongs to the insulin family. As to quaternary structure, heterodimer of a B chain and an A chain linked by two disulfide bonds. In terms of tissue distribution, located in 4 pairs of medial neurosecretory cells in the brain.

The protein localises to the secreted. The chain is Bombyxin-related peptide B from Agrius convolvuli (Convolvulus hawk-moth).